The following is a 312-amino-acid chain: Aquaglyceroporin-2 (312 aa).

Transmembrane regions (helical) follow at residues 78 to 98 (FLGN…SLLV), 104 to 124 (LGLT…SLGI), 151 to 171 (YIAA…GVFA), 203 to 223 (GIFY…LCVC), 239 to 259 (VAIG…SPLA), and 286 to 306 (YYFW…LFLY).

Belongs to the MIP/aquaporin (TC 1.A.8) family.

It is found in the membrane. It carries out the reaction glycerol(in) = glycerol(out). The catalysed reaction is H2O(in) = H2O(out). The enzyme catalyses urea(in) = urea(out). Functionally, mediates water and glycerol transport across cell membranes. Permeable to urea. Permeable to methylamine/methylammonium. Permeable to dihydroxyacetone. The polypeptide is Aquaglyceroporin-2 (Trypanosoma brucei brucei).